We begin with the raw amino-acid sequence, 231 residues long: Large ribosomal subunit protein uL1 (231 aa).

The protein belongs to the universal ribosomal protein uL1 family. In terms of assembly, part of the 50S ribosomal subunit.

Its function is as follows. Binds directly to 23S rRNA. The L1 stalk is quite mobile in the ribosome, and is involved in E site tRNA release. Protein L1 is also a translational repressor protein, it controls the translation of the L11 operon by binding to its mRNA. This Azotobacter vinelandii (strain DJ / ATCC BAA-1303) protein is Large ribosomal subunit protein uL1.